The following is a 219-amino-acid chain: Protein-L-isoaspartate O-methyltransferase 2 (219 aa).

Ser-60 is a catalytic residue.

The protein belongs to the methyltransferase superfamily. L-isoaspartyl/D-aspartyl protein methyltransferase family.

It localises to the cytoplasm. It carries out the reaction [protein]-L-isoaspartate + S-adenosyl-L-methionine = [protein]-L-isoaspartate alpha-methyl ester + S-adenosyl-L-homocysteine. Its function is as follows. Catalyzes the methyl esterification of L-isoaspartyl residues in peptides and proteins that result from spontaneous decomposition of normal L-aspartyl and L-asparaginyl residues. It plays a role in the repair and/or degradation of damaged proteins. This chain is Protein-L-isoaspartate O-methyltransferase 2 (pcm2), found in Archaeoglobus fulgidus (strain ATCC 49558 / DSM 4304 / JCM 9628 / NBRC 100126 / VC-16).